The chain runs to 200 residues: NADH-quinone oxidoreductase subunit C (200 aa).

This sequence belongs to the complex I 30 kDa subunit family. As to quaternary structure, NDH-1 is composed of 14 different subunits. Subunits NuoB, C, D, E, F, and G constitute the peripheral sector of the complex.

It is found in the cell inner membrane. The enzyme catalyses a quinone + NADH + 5 H(+)(in) = a quinol + NAD(+) + 4 H(+)(out). Its function is as follows. NDH-1 shuttles electrons from NADH, via FMN and iron-sulfur (Fe-S) centers, to quinones in the respiratory chain. The immediate electron acceptor for the enzyme in this species is believed to be ubiquinone. Couples the redox reaction to proton translocation (for every two electrons transferred, four hydrogen ions are translocated across the cytoplasmic membrane), and thus conserves the redox energy in a proton gradient. This is NADH-quinone oxidoreductase subunit C from Chelativorans sp. (strain BNC1).